We begin with the raw amino-acid sequence, 329 residues long: DGAT1/2-independent enzyme synthesizing storage lipids (329 aa).

Residues 1–50 are Lumenal-facing; it reads MIDNNQTCAAGQDSVPYVTCMIYVLEEWLGVEQLEDYLNFANHLLWVFTP. An N-linked (GlcNAc...) asparagine glycan is attached at Asn5. Residues 51-71 form a helical membrane-spanning segment; sequence LILLILPYFTIFLLYLTIIFL. At 72–120 the chain is on the cytoplasmic side; that stretch reads HIYKRKNVLKEAYSHNLWDGARKTVATLWDGHAAVWHGYEVHGMEKIPE. Residues 121–141 traverse the membrane as a helical segment; the sequence is GAALIIFYHGAIPIDFYYFMA. Residue His129 is part of the active site. Over 142 to 329 the chain is Lumenal; that stretch reads KIFIQKGRTC…DRFHKEQKAH (188 aa).

It belongs to the diacylglycerol acyltransferase family. Highly divergent. In terms of tissue distribution, widely expressed, with highest level in the brain, followed by lung and duodenum, and lowest levels in tongue, testis, skin and ileum.

Its subcellular location is the endoplasmic reticulum membrane. It catalyses the reaction a 1,2-diacylglycerol + a 1,2-diacyl-sn-glycero-3-phosphocholine = a triacylglycerol + a 1-acyl-sn-glycero-3-phosphocholine. The enzyme catalyses a 1-O-alkyl-2-acyl-sn-glycero-3-phosphocholine + a 1,2-diacylglycerol = a 1-O-alkyl-sn-glycero-3-phosphocholine + a triacylglycerol. The catalysed reaction is a 2-acylglycerol + an acyl-CoA = a 1,2-diacylglycerol + CoA. It carries out the reaction an acyl-CoA + a 1,2-diacyl-sn-glycerol = a triacyl-sn-glycerol + CoA. It catalyses the reaction 2-(9Z-octadecenoyl)-glycerol + (9Z)-octadecenoyl-CoA = 1,2-di-(9Z-octadecenoyl)-glycerol + CoA. The enzyme catalyses 1,2-di-(9Z-octadecenoyl)-sn-glycerol + (9Z)-octadecenoyl-CoA = 1,2,3-tri-(9Z-octadecenoyl)-glycerol + CoA. With respect to regulation, acyltransferase activity is specifically inhibited by TMX1 at the endoplasmic reticulum, restricting accumulation of triacylglycerol. Catalytic subunit of the alternative triglyceride biosynthesis pathway, which mediates formation of triacylglycerol from diacylglycerol and membrane phospholipids. Synthesizes triacylglycerol at the expense of membrane phospholipids, such as phosphatidylcholine (PC) and its ether-linked form (ePC), thereby altering the composition of membranes. The alternative triglyceride biosynthesis pathway is probably required to provide the energy required for rapid growth when fuel sources are limiting. It maintains mitochondrial function during periods of extracellular lipid starvation. Can also use acyl-CoA as donor: acts as a acyl-CoA:monoacylglycerol acyltransferase (MGAT), but also shows acyl-CoA:diacylglycerol acyltransferase (DGAT) activity. This is DGAT1/2-independent enzyme synthesizing storage lipids from Mus musculus (Mouse).